Here is a 353-residue protein sequence, read N- to C-terminus: uncharacterized protein (353 aa).

The first 28 residues, 1–28, serve as a signal peptide directing secretion; sequence MHLTIMRRFAVLLLLAIFLGGCSGSNGA.

This is an uncharacterized protein from Archaeoglobus fulgidus (strain ATCC 49558 / DSM 4304 / JCM 9628 / NBRC 100126 / VC-16).